The primary structure comprises 485 residues: Glutamate--tRNA ligase (485 aa).

The 'HIGH' region signature appears at Pro-12 to Thr-22. The 'KMSKS' region motif lies at Lys-253–Arg-257. Residue Lys-256 participates in ATP binding.

Belongs to the class-I aminoacyl-tRNA synthetase family. Glutamate--tRNA ligase type 1 subfamily. Monomer.

It is found in the cytoplasm. It carries out the reaction tRNA(Glu) + L-glutamate + ATP = L-glutamyl-tRNA(Glu) + AMP + diphosphate. Catalyzes the attachment of glutamate to tRNA(Glu) in a two-step reaction: glutamate is first activated by ATP to form Glu-AMP and then transferred to the acceptor end of tRNA(Glu). The protein is Glutamate--tRNA ligase of Rhizobium meliloti (strain 1021) (Ensifer meliloti).